The sequence spans 397 residues: Cathepsin E-A (397 aa).

The first 16 residues, 1 to 16 (MRQILVLLLFATLVYG), serve as a signal peptide directing secretion. The propeptide at 17-52 (LIRVPLKRQKSIRKTLKEKGKLSHIWTQQGIDMVQY) is activation peptide. Residues 74 to 385 (YFGEISVGTP…DRGNNRVGLA (312 aa)) form the Peptidase A1 domain. N-linked (GlcNAc...) asparagine glycosylation is present at Asn-86. Asp-92 is an active-site residue. The cysteines at positions 105 and 110 are disulfide-linked. The N-linked (GlcNAc...) asparagine glycan is linked to Asn-130. The cysteines at positions 268 and 272 are disulfide-linked. Residue Asp-277 is part of the active site. Residues Cys-310 and Cys-344 are joined by a disulfide bond.

This sequence belongs to the peptidase A1 family. Homodimer; disulfide-linked. Post-translationally, glycosylated. Contains high mannose-type oligosaccharide. As to expression, expressed predominantly in the larval foregut and the anterior and posterior adult stomach.

Its subcellular location is the endosome. The catalysed reaction is Similar to cathepsin D, but slightly broader specificity.. Functionally, may have a role in immune function. Probably involved in the processing of antigenic peptides during MHC class II-mediated antigen presentation. In Xenopus laevis (African clawed frog), this protein is Cathepsin E-A (ctse-a).